Reading from the N-terminus, the 282-residue chain is Putative 4-diphosphocytidyl-2-C-methyl-D-erythritol kinase (282 aa).

Lysine 9 is a catalytic residue. 93–103 is a binding site for ATP; it reads PVSAGLAGGSA. Aspartate 135 is a catalytic residue.

This sequence belongs to the GHMP kinase family. IspE subfamily.

It catalyses the reaction 4-CDP-2-C-methyl-D-erythritol + ATP = 4-CDP-2-C-methyl-D-erythritol 2-phosphate + ADP + H(+). Catalyzes the phosphorylation of the position 2 hydroxy group of 4-diphosphocytidyl-2C-methyl-D-erythritol. This chain is Putative 4-diphosphocytidyl-2-C-methyl-D-erythritol kinase, found in Staphylococcus haemolyticus (strain JCSC1435).